A 341-amino-acid polypeptide reads, in one-letter code: Phenylalanine--tRNA ligase alpha subunit (341 aa).

A Mg(2+)-binding site is contributed by Glu256.

The protein belongs to the class-II aminoacyl-tRNA synthetase family. Phe-tRNA synthetase alpha subunit type 1 subfamily. In terms of assembly, tetramer of two alpha and two beta subunits. The cofactor is Mg(2+).

It is found in the cytoplasm. The catalysed reaction is tRNA(Phe) + L-phenylalanine + ATP = L-phenylalanyl-tRNA(Phe) + AMP + diphosphate + H(+). The protein is Phenylalanine--tRNA ligase alpha subunit of Leptospira borgpetersenii serovar Hardjo-bovis (strain JB197).